Reading from the N-terminus, the 128-residue chain is MPKSVIIPAGSSAPLAPFVPGTLADGVVYVSGTLAFDQHNNVLFADDPKAQTRHVLEIIRKVIETAGGTMADVTFNSIFITDWKNYAAINEIYAEFFPGDKPARFCIQCGLVKPDALVEIATIAHIAK.

It belongs to the RutC family. Homotrimer.

The enzyme catalyses (Z)-3-aminoacrylate + H2O + H(+) = 3-oxopropanoate + NH4(+). Its function is as follows. Involved in pyrimidine catabolism. Catalyzes the deamination of 3-aminoacrylate to malonic semialdehyde, a reaction that can also occur spontaneously. RutC may facilitate the reaction and modulate the metabolic fitness, rather than catalyzing essential functions. In Escherichia coli O111:H- (strain 11128 / EHEC), this protein is 3-aminoacrylate deaminase RutC.